Here is a 411-residue protein sequence, read N- to C-terminus: ATP-dependent Clp protease ATP-binding subunit ClpX (411 aa).

Residues 1–51 (MAKKKDEEYCSFCGMPRTQVNLMLEGVHAHICDECALRAGEVVREALQKFK) enclose the ClpX-type ZB domain. Zn(2+)-binding residues include Cys10, Cys13, Cys32, and Cys35. Position 119–126 (119–126 (PTGTGKTL)) interacts with ATP.

Belongs to the ClpX chaperone family. Component of the ClpX-ClpP complex. Forms a hexameric ring that, in the presence of ATP, binds to fourteen ClpP subunits assembled into a disk-like structure with a central cavity, resembling the structure of eukaryotic proteasomes.

In terms of biological role, ATP-dependent specificity component of the Clp protease. It directs the protease to specific substrates. Can perform chaperone functions in the absence of ClpP. The protein is ATP-dependent Clp protease ATP-binding subunit ClpX of Porphyromonas gingivalis (strain ATCC 33277 / DSM 20709 / CIP 103683 / JCM 12257 / NCTC 11834 / 2561).